Here is a 198-residue protein sequence, read N- to C-terminus: Recombination protein RecR (198 aa).

A C4-type zinc finger spans residues 58–73 (CSICGNYTDSDPCAIC). Residues 81–175 (SIICVIEQPK…KVTRIAHGVP (95 aa)) enclose the Toprim domain.

It belongs to the RecR family.

Its function is as follows. May play a role in DNA repair. It seems to be involved in an RecBC-independent recombinational process of DNA repair. It may act with RecF and RecO. The sequence is that of Recombination protein RecR from Clostridium novyi (strain NT).